A 1230-amino-acid polypeptide reads, in one-letter code: ABC transporter B family member 5 (1230 aa).

The next 6 membrane-spanning stretches (helical) occupy residues 27–47 (VLLM…SPLM), 78–98 (LVYL…CWMI), 154–174 (FIQL…RGWL), 177–197 (LVML…AIIV), 253–273 (GFVT…TYAL), and 286–306 (GYTG…SIAL). The 289-residue stretch at 30–318 (MIVGSIGAIA…ASPCLTAFTA (289 aa)) folds into the ABC transmembrane type-1 1 domain. One can recognise an ABC transporter 1 domain in the interval 353-589 (IELRDVCFSY…HEGAYSQLLR (237 aa)). 388 to 395 (GESGSGKS) is a binding site for ATP. N-linked (GlcNAc...) asparagine glycosylation is found at Asn540, Asn615, and Asn616. A disordered region spans residues 602–621 (ISDGSISSGSSRGNNSTRQD). A compositionally biased stretch (low complexity) spans 603–617 (SDGSISSGSSRGNNS). 2 helical membrane-spanning segments follow: residues 662–682 (ILIL…IFGI) and 707–727 (MIFV…NYLF). In terms of domain architecture, ABC transmembrane type-1 2 spans 663–950 (LILGTLVGAV…ASSFAPDSSK (288 aa)). An N-linked (GlcNAc...) asparagine glycan is attached at Asn759. A run of 3 helical transmembrane segments spans residues 798–818 (IIAF…IPFI), 889–909 (GVGF…CFYV), and 924–944 (VFQV…ASSF). One can recognise an ABC transporter 2 domain in the interval 985–1223 (IELCHISFTY…EGGVYASLVQ (239 aa)). ATP is bound at residue 1020–1027 (GESGSGKS). Asn1074, Asn1174, and Asn1227 each carry an N-linked (GlcNAc...) asparagine glycan.

The protein belongs to the ABC transporter superfamily. ABCB family. Multidrug resistance exporter (TC 3.A.1.201) subfamily.

The protein resides in the membrane. The polypeptide is ABC transporter B family member 5 (ABCB5) (Arabidopsis thaliana (Mouse-ear cress)).